The chain runs to 467 residues: Interleukin-6 receptor subunit alpha (467 aa).

The signal sequence occupies residues Met1 to Ala19. The Ig-like C2-type domain maps to Leu20–Ala112. At Leu20–Pro365 the chain is on the extracellular side. 4 disulfides stabilise this stretch: Cys25–Cys193, Cys47–Cys96, Cys121–Cys132, and Cys165–Cys176. N-linked (GlcNAc...) asparagine glycosylation is found at Asn55 and Asn93. Fibronectin type-III domains lie at Pro113–Asp217 and Pro218–Thr316. N-linked (GlcNAc...) asparagine glycans are attached at residues Asn221 and Asn245. The short motif at Trp303–Ser307 is the WSXWS motif element. Positions Trp315–Gln357 are disordered. 2 stretches are compositionally biased toward polar residues: residues Glu317–Thr336 and Lys346–Gln357. The N-linked (GlcNAc...) asparagine glycan is linked to Asn350. An O-linked (GlcNAc) threonine glycan is attached at Thr352. Residues Thr366–Leu386 form a helical membrane-spanning segment. The Cytoplasmic segment spans residues Arg387–Arg467. Positions Ile428 to Arg467 are disordered.

Belongs to the type I cytokine receptor family. Type 3 subfamily. Component of a hexamer of two molecules each of IL6, IL6R and IL6ST; first binds to IL6 to associate with the signaling subunit IL6ST. Interacts (via N-terminal ectodomain) with SORL1; this interaction may affect IL6-binding to IL6R, hence decrease IL6 'classic-signaling'. In terms of assembly, also interacts with SORL1; this interaction leads to soluble IL6R internalization. May form a trimeric complex with the soluble SORL1 ectodomain and circulating IL6 receptor; this interaction might stabilize circulating IL6, hence promote IL6 'trans-signaling'. A short soluble form is also released from the membrane by proteolysis. The sIL6R is formed by limited proteolysis of membrane-bound receptors, a process referred to as ectodomain shedding. mIL6R is cleaved by the proteases ADAM10 and ADAM17. In terms of processing, glycosylated. Glycosylation is dispensable for transport, signaling, and cell-surface turnover. Glycosylation at Asn-55 is a protease-regulatory exosite. Glycosylation is required for ADAM17-mediated proteolysis. As to expression, expressed in liver.

The protein resides in the cell membrane. It localises to the secreted. With respect to regulation, classic and trans-signaling are both inhibited by tocilizumab, a humanized monoclonal antibody that blocks interleukin IL6R signaling. Its function is as follows. Part of the receptor for interleukin 6. Binds to IL6 with low affinity, but does not transduce a signal. Signal activation necessitate an association with IL6ST. Activation leads to the regulation of the immune response, acute-phase reactions and hematopoiesis. The interaction with membrane-bound IL6R and IL6ST stimulates 'classic signaling', the restricted expression of the IL6R limits classic IL6 signaling to only a few tissues such as the liver and some cells of the immune system. Whereas the binding of IL6 and soluble IL6R to IL6ST stimulates 'trans-signaling'. Alternatively, 'cluster signaling' occurs when membrane-bound IL6:IL6R complexes on transmitter cells activate IL6ST receptors on neighboring receiver cells. Signaling via the membrane-bound IL6R is mostly regenerative and anti-inflammatory. Drives naive CD4(+) T cells to the Th17 lineage, through 'cluster signaling' by dendritic cells. In terms of biological role, soluble form of IL6 receptor (sIL6R) that acts as an agonist of IL6 activity. The IL6:sIL6R complex (hyper-IL6) binds to IL6ST/gp130 on cell surfaces and induces signaling also on cells that do not express membrane-bound IL6R in a process called IL6 'trans-signaling'. sIL6R is causative for the pro-inflammatory properties of IL6 and an important player in the development of chronic inflammatory diseases. In complex with IL6, is required for induction of VEGF production. Plays a protective role during liver injury, being required for maintenance of tissue regeneration. 'Trans-signaling' in central nervous system regulates energy and glucose homeostasis. This chain is Interleukin-6 receptor subunit alpha (IL6R), found in Sus scrofa (Pig).